The following is a 276-amino-acid chain: Large ribosomal subunit protein uL2 (276 aa).

Positions 219–276 (TVRGSVMNPNDHPHGGGEGKQPIGRKQQMTPWGKKARGIKTRDKKKASTSMIVRRRNG) are disordered. A compositionally biased stretch (basic residues) spans 252–276 (KKARGIKTRDKKKASTSMIVRRRNG).

Belongs to the universal ribosomal protein uL2 family. Part of the 50S ribosomal subunit. Forms a bridge to the 30S subunit in the 70S ribosome.

Its function is as follows. One of the primary rRNA binding proteins. Required for association of the 30S and 50S subunits to form the 70S ribosome, for tRNA binding and peptide bond formation. It has been suggested to have peptidyltransferase activity; this is somewhat controversial. Makes several contacts with the 16S rRNA in the 70S ribosome. This chain is Large ribosomal subunit protein uL2, found in Acholeplasma laidlawii (strain PG-8A).